The primary structure comprises 330 residues: GMP reductase (330 aa).

The active-site Thioimidate intermediate is Cys-180. 209–232 (LIADGGIRHNGDIAKSVRFGASMV) contributes to the NADP(+) binding site.

The protein belongs to the IMPDH/GMPR family. GuaC type 2 subfamily.

The catalysed reaction is IMP + NH4(+) + NADP(+) = GMP + NADPH + 2 H(+). Functionally, catalyzes the irreversible NADPH-dependent deamination of GMP to IMP. It functions in the conversion of nucleobase, nucleoside and nucleotide derivatives of G to A nucleotides, and in maintaining the intracellular balance of A and G nucleotides. This Lactobacillus johnsonii (strain CNCM I-12250 / La1 / NCC 533) protein is GMP reductase.